A 313-amino-acid polypeptide reads, in one-letter code: Probable RuBisCO transcriptional regulator (313 aa).

The HTH lysR-type domain maps to phenylalanine 6–threonine 63. The H-T-H motif DNA-binding region spans phenylalanine 23–glutamine 42.

It belongs to the LysR transcriptional regulatory family.

It is found in the plastid. The protein resides in the chloroplast. Functionally, trans-acting transcriptional regulator of RuBisCO genes (rbcL and rbcS) expression. This is Probable RuBisCO transcriptional regulator (rbcR) from Chlorokybus atmophyticus (Soil alga).